Here is a 246-residue protein sequence, read N- to C-terminus: Phosphatidylserine decarboxylase proenzyme (246 aa).

S204 functions as the Schiff-base intermediate with substrate; via pyruvic acid in the catalytic mechanism. Pyruvic acid (Ser); by autocatalysis is present on S204.

The protein belongs to the phosphatidylserine decarboxylase family. PSD-A subfamily. In terms of assembly, heterodimer of a large membrane-associated beta subunit and a small pyruvoyl-containing alpha subunit. It depends on pyruvate as a cofactor. In terms of processing, is synthesized initially as an inactive proenzyme. Formation of the active enzyme involves a self-maturation process in which the active site pyruvoyl group is generated from an internal serine residue via an autocatalytic post-translational modification. Two non-identical subunits are generated from the proenzyme in this reaction, and the pyruvate is formed at the N-terminus of the alpha chain, which is derived from the carboxyl end of the proenzyme. The post-translation cleavage follows an unusual pathway, termed non-hydrolytic serinolysis, in which the side chain hydroxyl group of the serine supplies its oxygen atom to form the C-terminus of the beta chain, while the remainder of the serine residue undergoes an oxidative deamination to produce ammonia and the pyruvoyl prosthetic group on the alpha chain.

It is found in the cell membrane. The catalysed reaction is a 1,2-diacyl-sn-glycero-3-phospho-L-serine + H(+) = a 1,2-diacyl-sn-glycero-3-phosphoethanolamine + CO2. It functions in the pathway phospholipid metabolism; phosphatidylethanolamine biosynthesis; phosphatidylethanolamine from CDP-diacylglycerol: step 2/2. Its function is as follows. Catalyzes the formation of phosphatidylethanolamine (PtdEtn) from phosphatidylserine (PtdSer). The chain is Phosphatidylserine decarboxylase proenzyme from Zymomonas mobilis subsp. mobilis (strain ATCC 31821 / ZM4 / CP4).